We begin with the raw amino-acid sequence, 429 residues long: Trigger factor (429 aa).

The region spanning 161-246 (GDRLSIDFKG…INEVALPKEP (86 aa)) is the PPIase FKBP-type domain.

Belongs to the FKBP-type PPIase family. Tig subfamily.

It is found in the cytoplasm. The enzyme catalyses [protein]-peptidylproline (omega=180) = [protein]-peptidylproline (omega=0). In terms of biological role, involved in protein export. Acts as a chaperone by maintaining the newly synthesized protein in an open conformation. Functions as a peptidyl-prolyl cis-trans isomerase. The chain is Trigger factor from Ruthia magnifica subsp. Calyptogena magnifica.